Here is a 3131-residue protein sequence, read N- to C-terminus: Intermembrane lipid transfer protein vps1302 (3131 aa).

Positions 2 to 115 (LEGLLANFLN…VLESKRRQMQ (114 aa)) constitute a Chorein N-terminal domain. Basic and acidic residues predominate over residues 774 to 801 (DGKASDDDDNGDWRPESSESLDSHESEY). The interval 774-807 (DGKASDDDDNGDWRPESSESLDSHESEYKLNNTP) is disordered. The region spanning 2085–2363 (KVMIYPPYVI…NYSWDFPILK (279 aa)) is the SHR-BD domain.

The protein belongs to the VPS13 family.

It localises to the golgi apparatus. It is found in the trans-Golgi network. Mediates the transfer of lipids between membranes at organelle contact sites. May play a role in mitochondrial lipid homeostasis, Golgi vesicle transport, reticulophagy, actin cytoskeleton organization and formation of the forespore membrane. This Schizosaccharomyces pombe (strain 972 / ATCC 24843) (Fission yeast) protein is Intermembrane lipid transfer protein vps1302.